Here is a 499-residue protein sequence, read N- to C-terminus: MEEFQVYLELARSRQYDFLYPLIFREYIYALAYDHGFNNSILVENLGYDNKSSLLIIKRLITRMYQQNHLIISANDSNKNPFWGCKKNLYSQLISEGFAVSVEIPFSLQLISSLEGAEIVKSYNLRSIHSIFPFFEEKFAYLTYVSDVQIPYPIHLEILVQTXXXXXXXXSCFHLLRLFLYEYWNWNSLITPKKWISTFSKSNPRLFLFLYNFYVCEYESIFLFLRNKSSYLRLTSSGVLFERINFYAKIEYFVEVFDKDFLSTLWFFKDSFIHYGRYQGKSILASKNTPFLMTKWKYYLIHLWQCHFYVWSQPGKIHINQLSEHSFDFLGYFSNVRLNPSVVRSQMLENSFLIENVMKKLDTIIPIIPLIRSLAKAKFCNVLGHPISKPVWADSADFDIIDLFLRRCRNLSHYYNGSSTKKSLYRIKHILRLSCIKTLARKHKSTVRVFLKSLGSELLEEFFTEEKEILSLIFPRASSTLQRLYRGRIWYLDIFYFHQ.

This sequence belongs to the intron maturase 2 family. MatK subfamily.

Its subcellular location is the plastid. The protein resides in the chloroplast. Its function is as follows. Usually encoded in the trnK tRNA gene intron. Probably assists in splicing its own and other chloroplast group II introns. This is Maturase K from Chamaecrista fasciculata (Showy partridge pea).